We begin with the raw amino-acid sequence, 678 residues long: Putative pentatricopeptide repeat-containing protein At3g18840 (678 aa).

PPR repeat units lie at residues 22 to 56 (TAVS…NVYS), 57 to 84 (WNAV…NCER), 85 to 116 (DLIT…MHRK), 124 to 158 (DDFT…GNDG), 159 to 190 (TKFA…CVEF), 192 to 222 (DSVA…NPEL), 224 to 258 (DTIS…GLKW), 259 to 293 (DEHS…GSYS), 294 to 324 (NKFV…YGFG), 325 to 359 (NLYS…NLVV), 360 to 390 (WTAM…ETNT), 392 to 426 (DSLV…GILM), 427 to 457 (DKKL…SFER), 458 to 492 (DTVM…GFKP), 493 to 528 (DEIT…NISP), and 529 to 563 (ETGH…EKDA). Residues 565–640 (ILGAFLNACS…FSGCSWANID (76 aa)) are type E motif. Positions 641–671 (KQFHMFTSSDISHYETEAIYAMLHFVTKDLS) are type E(+) motif.

It belongs to the PPR family. PCMP-E subfamily.

The sequence is that of Putative pentatricopeptide repeat-containing protein At3g18840 (PCMP-E92) from Arabidopsis thaliana (Mouse-ear cress).